The following is a 387-amino-acid chain: Galactokinase (387 aa).

Residue 36 to 39 (EHTD) coordinates substrate. Residues serine 70 and 125 to 131 (GAGLSSS) contribute to the ATP site. 2 residues coordinate Mg(2+): serine 131 and glutamate 163. Aspartate 175 serves as the catalytic Proton acceptor. Substrate is bound at residue tyrosine 227.

This sequence belongs to the GHMP kinase family. GalK subfamily.

It is found in the cytoplasm. It catalyses the reaction alpha-D-galactose + ATP = alpha-D-galactose 1-phosphate + ADP + H(+). It functions in the pathway carbohydrate metabolism; galactose metabolism. Functionally, catalyzes the transfer of the gamma-phosphate of ATP to D-galactose to form alpha-D-galactose-1-phosphate (Gal-1-P). This Streptomyces coelicolor (strain ATCC BAA-471 / A3(2) / M145) protein is Galactokinase.